We begin with the raw amino-acid sequence, 365 residues long: tRNA/tmRNA (uracil-C(5))-methyltransferase (365 aa).

Residues Gln189, Tyr217, Asn222, Glu238, and Asp298 each contribute to the S-adenosyl-L-methionine site. Cys323 (nucleophile) is an active-site residue. Residue Glu357 is the Proton acceptor of the active site.

It belongs to the class I-like SAM-binding methyltransferase superfamily. RNA M5U methyltransferase family. TrmA subfamily.

The enzyme catalyses uridine(54) in tRNA + S-adenosyl-L-methionine = 5-methyluridine(54) in tRNA + S-adenosyl-L-homocysteine + H(+). It catalyses the reaction uridine(341) in tmRNA + S-adenosyl-L-methionine = 5-methyluridine(341) in tmRNA + S-adenosyl-L-homocysteine + H(+). In terms of biological role, dual-specificity methyltransferase that catalyzes the formation of 5-methyluridine at position 54 (m5U54) in all tRNAs, and that of position 341 (m5U341) in tmRNA (transfer-mRNA). This Shewanella sp. (strain MR-4) protein is tRNA/tmRNA (uracil-C(5))-methyltransferase.